We begin with the raw amino-acid sequence, 289 residues long: Thiosulfate sulfurtransferase (289 aa).

Positions 24–142 constitute a Rhodanese 1 domain; it reads VGAGLRVLDA…WVKEGHPVTA (119 aa). Residues 143 to 158 form a hinge region; it reads EPSQPAEAVFKAKLDK. The Rhodanese 2 domain occupies 172 to 284; that stretch reads GSKKFQVVDS…WFHRAPPQYK (113 aa). Substrate is bound at residue R186. The active-site Cysteine persulfide intermediate is the C244. K246 provides a ligand contact to substrate.

As to quaternary structure, monomer. Expressed in numerous tissues.

It is found in the mitochondrion matrix. It catalyses the reaction thiosulfate + hydrogen cyanide = thiocyanate + sulfite + 2 H(+). In terms of biological role, together with MRPL18, acts as a mitochondrial import factor for the cytosolic 5S rRNA. Only the nascent unfolded cytoplasmic form is able to bind to the 5S rRNA. Formation of iron-sulfur complexes and cyanide detoxification. The sequence is that of Thiosulfate sulfurtransferase (TST) from Gallus gallus (Chicken).